Consider the following 211-residue polypeptide: ATP phosphoribosyltransferase (211 aa).

It belongs to the ATP phosphoribosyltransferase family. Short subfamily. Heteromultimer composed of HisG and HisZ subunits.

The protein localises to the cytoplasm. It carries out the reaction 1-(5-phospho-beta-D-ribosyl)-ATP + diphosphate = 5-phospho-alpha-D-ribose 1-diphosphate + ATP. The protein operates within amino-acid biosynthesis; L-histidine biosynthesis; L-histidine from 5-phospho-alpha-D-ribose 1-diphosphate: step 1/9. Its function is as follows. Catalyzes the condensation of ATP and 5-phosphoribose 1-diphosphate to form N'-(5'-phosphoribosyl)-ATP (PR-ATP). Has a crucial role in the pathway because the rate of histidine biosynthesis seems to be controlled primarily by regulation of HisG enzymatic activity. This chain is ATP phosphoribosyltransferase, found in Bacillus cereus (strain ATCC 14579 / DSM 31 / CCUG 7414 / JCM 2152 / NBRC 15305 / NCIMB 9373 / NCTC 2599 / NRRL B-3711).